The sequence spans 182 residues: MGNVFANLFKGLFGKKEMRILMVGLDAAGKTTILYKLKLGEIVTTIPTIGFNVETVEYKNISFTVWDVGGQDKIRPLWRHYFQNTQGLIFVVDSNDRERIGEAREELMRMLAEDELRDAVLLIFANKQDLPNAMNAAEITDKLGLHSLRNRNWYIQATCATSGDGLYEGLDWLSNQLKNANR.

A lipid anchor (N-myristoyl glycine) is attached at G2. Residues 3–16 form an important for the stable binding to the membranes region; it reads NVFANLFKGLFGKK. GTP-binding positions include 24-32, 126-129, and A160; these read GLDAAGKTT and NKQD.

Belongs to the small GTPase superfamily. Arf family.

The protein resides in the golgi apparatus membrane. It is found in the cytoplasm. Its subcellular location is the cytosol. It catalyses the reaction GTP + H2O = GDP + phosphate + H(+). Alternates between an inactive GDP-bound form and an active GTP-bound form. Activated by a guanine nucleotide-exchange factor (GEF) and inactivated by GTPase-activating protein (GAP). Small GTPase involved in protein trafficking between different compartments. Modulates vesicle budding and uncoating within the Golgi complex. In its GTP-bound form, triggers the recruitment of coatomer proteins to the Golgi membrane. The hydrolysis of ARF1-bound GTP, which is mediated by ARFGAPs proteins, is required for dissociation of coat proteins from Golgi membranes and vesicles. Has a role in eye development. Required for cleavage furrow ingression in embryonic cells. This Drosophila melanogaster (Fruit fly) protein is ADP-ribosylation factor 1.